A 479-amino-acid polypeptide reads, in one-letter code: MFS-type transporter lnaF (479 aa).

A run of 11 helical transmembrane segments spans residues 47-67 (WIYL…GFTP), 71-91 (GLII…SGAI), 104-124 (LLCI…GPLI), 136-156 (WCFY…VFLL), 177-197 (LVGL…LSWG), 208-228 (IIGL…VQWW), 250-270 (IFSF…PIWF), 283-303 (LMSI…AVLV), 306-326 (IGFY…GAGL), 344-364 (IPFG…VQAV), and 372-392 (LAIA…ISVA). Asn416 is a glycosylation site (N-linked (GlcNAc...) asparagine). A helical transmembrane segment spans residues 442-462 (LAITQALYVGVALSSLAIVGA).

The protein belongs to the major facilitator superfamily. TCR/Tet family.

The protein localises to the cell membrane. In terms of biological role, MFS-type transporter; part of the lnb gene cluster that mediates the biosynthesis of diastereomeric piperazines. Lna and lnb clusters encode sets of enzymes that produce overlapping sets of previously undescribed metabolites such as piperazinomycin-like metabolites or morpholine. The lna and lnb biosynthetic pathways appear to be part of a signaling network that controls the formation of sclerotia, a resilient overwintering structure. May be involved in the secretion of the metabolites produced by the lna and lnb clusters. This is MFS-type transporter lnaF from Aspergillus flavus (strain ATCC 200026 / FGSC A1120 / IAM 13836 / NRRL 3357 / JCM 12722 / SRRC 167).